The sequence spans 223 residues: Transcriptional regulatory protein PhoP (223 aa).

Residues 2-116 (RVLVVEDNAL…EVMARMQALM (115 aa)) form the Response regulatory domain. At Asp-51 the chain carries 4-aspartylphosphate. The segment at residues 124–222 (SQVISLPPFQ…VRGQGYLFEL (99 aa)) is a DNA-binding region (ompR/PhoB-type).

Phosphorylated by PhoQ.

The protein localises to the cytoplasm. Member of the two-component regulatory system PhoQ/PhoP involved in virulence, adaptation to low Mg(2+) environments and the control of acid resistance genes. In Escherichia coli O157:H7, this protein is Transcriptional regulatory protein PhoP (phoP).